Consider the following 656-residue polypeptide: Phosphatidylinositol 4,5-bisphosphate-binding protein SLM2 (656 aa).

One can recognise a PH domain in the interval 445–555; the sequence is FEVKSGFLEK…WFGNIKALSS (111 aa). A disordered region spans residues 577–605; it reads AKSNENTTESVTPQVTNEQHTRYDDVSSS. Residues 580–594 show a composition bias toward polar residues; sequence NENTTESVTPQVTNE. Serine 626 is subject to Phosphoserine. Residues 640–645 carry the PXIXIT-like, required for interaction with CNA1 and CNA2, and calcineurin-dependent dephosphorylation motif; sequence PEFYIE. Phosphoserine occurs at positions 649 and 653.

In terms of assembly, heterodimer of SLM1-SLM2. Binds phosphatidylinositol 4,5-bisphosphate, which is required for function. Interacts with the TORC2 subunits AVO2, BIT61 and TOR2. Interacts with the calcineurin catalytic subunits CNA1 and CNA2.

Its subcellular location is the cell membrane. Functionally, together with SLM1, effector of the TORC2- and calcineurin-signaling pathways. Phosphorylated and activated by TORC2 under favorable growth conditions. Mediates actin polarization via inhibition of calcineurin-dependent transcription. Upon nutrient limitation or environmental stress, gets dephosphorylated by calcineurin, inhibiting interaction with TORC2, thereby antagonizing TORC2 signaling and mediating calcineurin-dependent actin depolarization. Also functions in heat-induced, calcineurin-mediated uracil permease (FUR4) endocytosis. This Saccharomyces cerevisiae (strain ATCC 204508 / S288c) (Baker's yeast) protein is Phosphatidylinositol 4,5-bisphosphate-binding protein SLM2 (SLM2).